The following is a 363-amino-acid chain: Peptide chain release factor 1 (363 aa).

The residue at position 237 (Gln-237) is an N5-methylglutamine.

The protein belongs to the prokaryotic/mitochondrial release factor family. Post-translationally, methylated by PrmC. Methylation increases the termination efficiency of RF1.

It localises to the cytoplasm. Peptide chain release factor 1 directs the termination of translation in response to the peptide chain termination codons UAG and UAA. This Marinobacter nauticus (strain ATCC 700491 / DSM 11845 / VT8) (Marinobacter aquaeolei) protein is Peptide chain release factor 1.